A 603-amino-acid chain; its full sequence is NADH-ubiquinone oxidoreductase chain 5 (603 aa).

14 helical membrane passes run 4–24, 36–56, 87–107, 122–142, 171–191, 211–233, 241–261, 272–292, 301–320, 325–347, 370–390, 406–422, 488–508, and 583–603; these read YTSI…ATLV, VKTT…LYIF, MMFI…SLWY, LIFL…QLFI, AVLY…WFLL, LPLM…HPWL, TPVS…FLLI, LTQN…AMCA, IVAF…IGIN, AFLH…GSII, STSL…TGFY, AWAL…TSAY, LLAL…TLMT, and MIKL…LLMV.

The protein belongs to the complex I subunit 5 family. As to quaternary structure, core subunit of respiratory chain NADH dehydrogenase (Complex I) which is composed of 45 different subunits.

The protein resides in the mitochondrion inner membrane. It catalyses the reaction a ubiquinone + NADH + 5 H(+)(in) = a ubiquinol + NAD(+) + 4 H(+)(out). Its function is as follows. Core subunit of the mitochondrial membrane respiratory chain NADH dehydrogenase (Complex I) which catalyzes electron transfer from NADH through the respiratory chain, using ubiquinone as an electron acceptor. Essential for the catalytic activity and assembly of complex I. The chain is NADH-ubiquinone oxidoreductase chain 5 (MT-ND5) from Papio hamadryas (Hamadryas baboon).